The primary structure comprises 246 residues: MFRDLKPAYLFCCSVLYAFSVLRPSQGISVSTHHNLHKTVGSDVTLYCGFWSNEYVSDLTTLSWRFRPDNSRDIISIFHYGNGVPYIEKWGQFRGRVEWVGDISKHDGSIVIRNLDYIDNGTFTCDVKNPPDVVGTSSDVHLTVYDKIPPVGAGVVSGAIIGTFLGIILLIVGGLYLFRYIVRRRARSETSFLQRRRSAAERGKVSGKAGTVSKGPVLYATLDQSKSGKGASEKKSKLSESKRDKK.

Positions 1-27 (MFRDLKPAYLFCCSVLYAFSVLRPSQG) are cleaved as a signal peptide. Residues 28-143 (ISVSTHHNLH…VGTSSDVHLT (116 aa)) form the Ig-like V-type domain. Over 28–150 (ISVSTHHNLH…HLTVYDKIPP (123 aa)) the chain is Extracellular. The cysteines at positions 48 and 125 are disulfide-linked. The N-linked (GlcNAc...) (complex) asparagine glycan is linked to Asn120. The helical transmembrane segment at 151 to 178 (VGAGVVSGAIIGTFLGIILLIVGGLYLF) threads the bilayer. The Cytoplasmic segment spans residues 179 to 246 (RYIVRRRARS…KLSESKRDKK (68 aa)). Positions 200–246 (AERGKVSGKAGTVSKGPVLYATLDQSKSGKGASEKKSKLSESKRDKK) are disordered. Residues 231 to 246 (ASEKKSKLSESKRDKK) show a composition bias toward basic and acidic residues.

The protein belongs to the myelin P0 protein family. In terms of processing, N-glycan is sulfated. As to expression, found only in peripheral nervous system Schwann cells.

Its subcellular location is the cell membrane. Functionally, creation of an extracellular membrane face which guides the wrapping process and ultimately compacts adjacent lamellae. This is Myelin protein P0 (mpz) from Heterodontus francisci (Horn shark).